The sequence spans 33 residues: RNA-directed RNA polymerase beta chain (33 aa).

As to quaternary structure, the polymerase complex is composed of four chains, the three other proteins of the complex (alpha, gamma, and delta chains) are supplied by the host cell.

It carries out the reaction RNA(n) + a ribonucleoside 5'-triphosphate = RNA(n+1) + diphosphate. Functionally, this enzyme is part of the viral RNA-dependent RNA polymerase complex. This Escherichia phage BZ13 (Bacteriophage BZ13) protein is RNA-directed RNA polymerase beta chain.